Reading from the N-terminus, the 201-residue chain is Recombination protein RecR (201 aa).

The C4-type zinc finger occupies 60–75 (CKTCGNIDTQNPCTVC). The Toprim domain occupies 83–178 (AIIVVVADVA…KVTRLAHGVP (96 aa)).

Belongs to the RecR family.

May play a role in DNA repair. It seems to be involved in an RecBC-independent recombinational process of DNA repair. It may act with RecF and RecO. The sequence is that of Recombination protein RecR from Rhodopseudomonas palustris (strain BisA53).